The primary structure comprises 794 residues: Histone-lysine N-methyltransferase, H3 lysine-9 specific SUVH5 (794 aa).

2 disordered regions span residues 187-210 and 254-276; these read VGRDLSPNMGSKFSKNGKTAKRSI and SPVKPSEKRNGDYGEGSMRKNSE. Residues 194–203 show a composition bias toward polar residues; sequence NMGSKFSKNG. The span at 258-276 shows a compositional bias: basic and acidic residues; sequence PSEKRNGDYGEGSMRKNSE. In terms of domain architecture, YDG spans 365-515; that stretch reads GTVPGVEVGD…KLVFKFKLRR (151 aa). The Pre-SET domain occupies 585-644; sequence KSCGCTNGCSKSKNCACIVKNGGKIPYYDGAIVEIKPLVYECGPHCKCPPSCNMRVSQHG. The 118-residue stretch at 647–764 folds into the SET domain; that stretch reads IKLEIFKTES…PLQELSYDYN (118 aa). One can recognise a Post-SET domain in the interval 778-794; sequence KKKFCYCGSAECSGRLY.

This sequence belongs to the class V-like SAM-binding methyltransferase superfamily. Histone-lysine methyltransferase family. Suvar3-9 subfamily. In terms of tissue distribution, expressed in leaves stems and flowers.

The protein localises to the nucleus. It localises to the chromosome. It is found in the centromere. The catalysed reaction is N(6)-methyl-L-lysyl(9)-[histone H3] + S-adenosyl-L-methionine = N(6),N(6)-dimethyl-L-lysyl(9)-[histone H3] + S-adenosyl-L-homocysteine + H(+). The enzyme catalyses L-lysyl(9)-[histone H3] + S-adenosyl-L-methionine = N(6)-methyl-L-lysyl(9)-[histone H3] + S-adenosyl-L-homocysteine + H(+). In terms of biological role, histone methyltransferase. Methylates 'Lys-9' of histone H3. H3 'Lys-9' methylation represents a specific tag for epigenetic transcriptional repression. This chain is Histone-lysine N-methyltransferase, H3 lysine-9 specific SUVH5 (SUVH5), found in Arabidopsis thaliana (Mouse-ear cress).